The primary structure comprises 320 residues: Zinc transporter ZitB (320 aa).

The next 6 helical transmembrane spans lie at 16–36 (LLAAFIITATFMVAEVIGGLL), 43–63 (LADAGHMLTDAAALFVALVAV), 85–105 (AAFVNALTLILITAFIFWEAI), 117–137 (VPMLLVAIAGLLANIVAFWLL), 153–173 (LHVLGDLLGSVGAIAAAIIIL), and 180–200 (IDPILSILVSCLVLRSAWALL).

Belongs to the cation diffusion facilitator (CDF) transporter (TC 2.A.4) family. SLC30A subfamily.

The protein resides in the cell inner membrane. Functionally, involved in zinc efflux across the cytoplasmic membrane, thus reducing zinc accumulation in the cytoplasm and rendering bacteria more resistant to zinc. It may contribute to zinc homeostasis at low concentrations of zinc. The protein is Zinc transporter ZitB of Pectobacterium atrosepticum (strain SCRI 1043 / ATCC BAA-672) (Erwinia carotovora subsp. atroseptica).